The chain runs to 819 residues: Protein SCARECROW (819 aa).

4 disordered regions span residues leucine 6–arginine 49, histidine 65–asparagine 136, serine 212–threonine 231, and proline 393–threonine 420. A compositionally biased stretch (low complexity) spans threonine 15–threonine 33. A compositionally biased stretch (polar residues) spans arginine 79 to valine 98. Over residues threonine 99–asparagine 136 the composition is skewed to low complexity. Residues threonine 418–leucine 448 adopt a coiled-coil conformation. The region spanning lysine 438 to arginine 806 is the GRAS domain. Residues leucine 445–tyrosine 507 are leucine repeat I (LRI). Positions leucine 452–glutamate 456 match the LxCxE motif motif. The interval phenylalanine 526–glycine 591 is VHIID. The VHIID motif lies at valine 557 to aspartate 561. The interval alanine 601–lysine 633 is leucine repeat II (LRII). Residues valine 642–asparagine 729 form a PFYRE region. The SAW stretch occupies residues alanine 732–arginine 806.

This sequence belongs to the GRAS family. In terms of tissue distribution, expressed in shoot apical meristem, leaf primordia, between the cortex and the differentiating vessels in lower shoots and in root endodermis.

The protein resides in the nucleus. Its function is as follows. Putative transcription factor involved in asymmetric cell division. The polypeptide is Protein SCARECROW (SCR) (Pisum sativum (Garden pea)).